The primary structure comprises 445 residues: KICSTOR subunit 2 (445 aa).

Belongs to the KICS2 family. In terms of assembly, part of the KICSTOR complex composed of KPTN, ITFG2, KICS2 and SZT2. SZT2 probably serves as a link between the other three proteins in the KICSTOR complex and may mediate the direct interaction with the GATOR complex via GATOR1. The KICSTOR complex interacts directly with the GATOR1 complex and most probably indirectly with the GATOR2 complex in an amino acid-independent manner.

The protein resides in the lysosome membrane. Functionally, as part of the KICSTOR complex functions in the amino acid-sensing branch of the TORC1 signaling pathway. Recruits, in an amino acid-independent manner, the GATOR1 complex to the lysosomal membranes and allows its interaction with GATOR2 and the RAG GTPases. Functions upstream of the RAG GTPases and is required to negatively regulate mTORC1 signaling in absence of amino acids. In absence of the KICSTOR complex mTORC1 is constitutively localized to the lysosome and activated. The KICSTOR complex is also probably involved in the regulation of mTORC1 by glucose. The sequence is that of KICSTOR subunit 2 from Mus musculus (Mouse).